Here is a 173-residue protein sequence, read N- to C-terminus: Dual-action ribosomal maturation protein DarP (173 aa).

This sequence belongs to the DarP family.

Its subcellular location is the cytoplasm. Functionally, member of a network of 50S ribosomal subunit biogenesis factors which assembles along the 30S-50S interface, preventing incorrect 23S rRNA structures from forming. Promotes peptidyl transferase center (PTC) maturation. The sequence is that of Dual-action ribosomal maturation protein DarP from Pseudomonas entomophila (strain L48).